Consider the following 726-residue polypeptide: Catalase-peroxidase (726 aa).

Polar residues predominate over residues 1 to 12 (MSTPSDQHNTLS). Positions 1–34 (MSTPSDQHNTLSAGKCPFHQGNSNQTAGGGTSSR) are disordered. Positions 105–226 (WHSAGTYRSA…LGATEMGLIY (122 aa)) form a cross-link, tryptophyl-tyrosyl-methioninium (Trp-Tyr) (with M-252). Catalysis depends on His106, which acts as the Proton acceptor. A cross-link (tryptophyl-tyrosyl-methioninium (Tyr-Met) (with W-105)) is located at residues 226–252 (YVNPEGPNHSGDPASAAPAIRATFGNM). Residue His267 coordinates heme b.

Belongs to the peroxidase family. Peroxidase/catalase subfamily. Homodimer or homotetramer. It depends on heme b as a cofactor. Formation of the three residue Trp-Tyr-Met cross-link is important for the catalase, but not the peroxidase activity of the enzyme.

The enzyme catalyses H2O2 + AH2 = A + 2 H2O. The catalysed reaction is 2 H2O2 = O2 + 2 H2O. Bifunctional enzyme with both catalase and broad-spectrum peroxidase activity. This chain is Catalase-peroxidase, found in Cronobacter sakazakii (strain ATCC BAA-894) (Enterobacter sakazakii).